We begin with the raw amino-acid sequence, 680 residues long: Heterokaryon incompatibility protein 6, OR allele (680 aa).

Its function is as follows. Involved in the non-self-recognition during asexual growth of N.crassa. This process involves restriction of heterokaryon formation via genetic differences at 11 het loci, including mating type. The sequence is that of Heterokaryon incompatibility protein 6, OR allele (het-6) from Neurospora crassa (strain ATCC 24698 / 74-OR23-1A / CBS 708.71 / DSM 1257 / FGSC 987).